The primary structure comprises 366 residues: GDSL esterase/lipase LTL1 (366 aa).

The signal sequence occupies residues 1 to 27 (MNINCSPLGFLISLFFIVTFLAPQVKS). The active-site Nucleophile is Ser36. Asn117 carries an N-linked (GlcNAc...) asparagine glycan. Active-site residues include Asp326 and His329. An N-linked (GlcNAc...) asparagine glycan is attached at Asn354.

The protein belongs to the 'GDSL' lipolytic enzyme family. As to quaternary structure, binds to VLG at the endomembrane system. Mostly expressed in flowers, reproductive stems and rosette leaves, and, to a lower extent, in roots.

The protein resides in the secreted. In terms of biological role, involved in the mechanisms of salt tolerance. Mediates resistance to LiCl and NaCl. The chain is GDSL esterase/lipase LTL1 from Arabidopsis thaliana (Mouse-ear cress).